Reading from the N-terminus, the 499-residue chain is Maturase K (499 aa).

Belongs to the intron maturase 2 family. MatK subfamily.

The protein resides in the plastid. It is found in the chloroplast. Functionally, usually encoded in the trnK tRNA gene intron. Probably assists in splicing its own and other chloroplast group II introns. The sequence is that of Maturase K from Neltuma juliflora (Mesquite).